A 110-amino-acid chain; its full sequence is Iron-sulfur cluster assembly protein CyaY (110 aa).

This sequence belongs to the frataxin family.

Involved in iron-sulfur (Fe-S) cluster assembly. May act as a regulator of Fe-S biogenesis. The sequence is that of Iron-sulfur cluster assembly protein CyaY from Ectopseudomonas mendocina (strain ymp) (Pseudomonas mendocina).